The sequence spans 104 residues: UPF0145 protein TM1040_1243 (104 aa).

Belongs to the UPF0145 family.

The chain is UPF0145 protein TM1040_1243 from Ruegeria sp. (strain TM1040) (Silicibacter sp.).